A 265-amino-acid chain; its full sequence is Small ribosomal subunit protein uS2 (265 aa).

It belongs to the universal ribosomal protein uS2 family.

The protein is Small ribosomal subunit protein uS2 of Aliarcobacter butzleri (strain RM4018) (Arcobacter butzleri).